The sequence spans 361 residues: MAGNTIGQLFRVTTFGESHGLALGCIVDGVPPGIPLTEADLQHDLDRRRPGTSRYTTQRREPDQVKILSGVFDGVTTGTSIGLLIENTDQRSQDYSAIKDVFRPGHADYTYEQKYGLRDYRGGGRSSARETAMRVAAGAIAKKYLAEKFGIEIRGCLTQMGDIPLEIKDWQQVERNPFFCPDADKLDALDELMRALKKEGDSIGAKVTVIASGVPAGLGEPVFDRLDADIAHALMSINAVKGVEIGEGFKVVALRGSQNRDEITAQGFQSNHAGGILGGISSGQHIVAHMALKPTSSITVPGRTINRMGEEVEMITKGRHDPCVGIRAVPIAEAMLAIVLMDHLLRHRAQNADVKTEIPRW.

The NADP(+) site is built by Arg-48 and Arg-54. FMN-binding positions include 125-127 (RSS), 238-239 (NA), Gly-278, 293-297 (KPTSS), and Arg-319.

The protein belongs to the chorismate synthase family. Homotetramer. The cofactor is FMNH2.

It catalyses the reaction 5-O-(1-carboxyvinyl)-3-phosphoshikimate = chorismate + phosphate. It participates in metabolic intermediate biosynthesis; chorismate biosynthesis; chorismate from D-erythrose 4-phosphate and phosphoenolpyruvate: step 7/7. In terms of biological role, catalyzes the anti-1,4-elimination of the C-3 phosphate and the C-6 proR hydrogen from 5-enolpyruvylshikimate-3-phosphate (EPSP) to yield chorismate, which is the branch point compound that serves as the starting substrate for the three terminal pathways of aromatic amino acid biosynthesis. This reaction introduces a second double bond into the aromatic ring system. This chain is Chorismate synthase, found in Salmonella arizonae (strain ATCC BAA-731 / CDC346-86 / RSK2980).